A 567-amino-acid chain; its full sequence is Proline--tRNA ligase (567 aa).

It belongs to the class-II aminoacyl-tRNA synthetase family. ProS type 1 subfamily. Homodimer.

It is found in the cytoplasm. The enzyme catalyses tRNA(Pro) + L-proline + ATP = L-prolyl-tRNA(Pro) + AMP + diphosphate. Its function is as follows. Catalyzes the attachment of proline to tRNA(Pro) in a two-step reaction: proline is first activated by ATP to form Pro-AMP and then transferred to the acceptor end of tRNA(Pro). As ProRS can inadvertently accommodate and process non-cognate amino acids such as alanine and cysteine, to avoid such errors it has two additional distinct editing activities against alanine. One activity is designated as 'pretransfer' editing and involves the tRNA(Pro)-independent hydrolysis of activated Ala-AMP. The other activity is designated 'posttransfer' editing and involves deacylation of mischarged Ala-tRNA(Pro). The misacylated Cys-tRNA(Pro) is not edited by ProRS. This Geobacillus kaustophilus (strain HTA426) protein is Proline--tRNA ligase.